The primary structure comprises 249 residues: Octanoyltransferase (249 aa).

The tract at residues 1–23 (MVNSPQNPRQDQRQDLDLTSFSA) is disordered. One can recognise a BPL/LPL catalytic domain in the interval 57 to 241 (GEAPELVWLL…AFEELFGPTR (185 aa)). Residues 95 to 102 (RGGQLTYH), 170 to 172 (AIG), and 183 to 185 (GIA) contribute to the substrate site. The Acyl-thioester intermediate role is filled by cysteine 201.

The protein belongs to the LipB family.

The protein localises to the cytoplasm. The enzyme catalyses octanoyl-[ACP] + L-lysyl-[protein] = N(6)-octanoyl-L-lysyl-[protein] + holo-[ACP] + H(+). It functions in the pathway protein modification; protein lipoylation via endogenous pathway; protein N(6)-(lipoyl)lysine from octanoyl-[acyl-carrier-protein]: step 1/2. Catalyzes the transfer of endogenously produced octanoic acid from octanoyl-acyl-carrier-protein onto the lipoyl domains of lipoate-dependent enzymes. Lipoyl-ACP can also act as a substrate although octanoyl-ACP is likely to be the physiological substrate. This chain is Octanoyltransferase, found in Bradyrhizobium diazoefficiens (strain JCM 10833 / BCRC 13528 / IAM 13628 / NBRC 14792 / USDA 110).